Reading from the N-terminus, the 132-residue chain is Small ribosomal subunit protein uS8 (132 aa).

Belongs to the universal ribosomal protein uS8 family. In terms of assembly, part of the 30S ribosomal subunit. Contacts proteins S5 and S12.

In terms of biological role, one of the primary rRNA binding proteins, it binds directly to 16S rRNA central domain where it helps coordinate assembly of the platform of the 30S subunit. The sequence is that of Small ribosomal subunit protein uS8 from Levilactobacillus brevis (strain ATCC 367 / BCRC 12310 / CIP 105137 / JCM 1170 / LMG 11437 / NCIMB 947 / NCTC 947) (Lactobacillus brevis).